A 453-amino-acid polypeptide reads, in one-letter code: Bifunctional protein GlmU (453 aa).

The pyrophosphorylase stretch occupies residues 1–227; that stretch reads MNKLSVVILA…LMEVEGVNNR (227 aa). UDP-N-acetyl-alpha-D-glucosamine is bound by residues 9 to 12, K23, Q74, 79 to 80, 101 to 103, G138, E152, N167, and N225; these read LAAG, GT, and YGD. Residue D103 coordinates Mg(2+). A Mg(2+)-binding site is contributed by N225. A linker region spans residues 228 to 248; sequence LQLANLERHFQRKQVEKLLLA. The interval 249 to 453 is N-acetyltransferase; that stretch reads GVTFADPARF…ISNWQRPKRK (205 aa). Residues R331 and K349 each coordinate UDP-N-acetyl-alpha-D-glucosamine. H361 functions as the Proton acceptor in the catalytic mechanism. UDP-N-acetyl-alpha-D-glucosamine contacts are provided by Y364 and N375. Residues A378, 384-385, S403, A421, and R438 contribute to the acetyl-CoA site; that span reads NY.

It in the N-terminal section; belongs to the N-acetylglucosamine-1-phosphate uridyltransferase family. In the C-terminal section; belongs to the transferase hexapeptide repeat family. As to quaternary structure, homotrimer. Requires Mg(2+) as cofactor.

It is found in the cytoplasm. The catalysed reaction is alpha-D-glucosamine 1-phosphate + acetyl-CoA = N-acetyl-alpha-D-glucosamine 1-phosphate + CoA + H(+). It catalyses the reaction N-acetyl-alpha-D-glucosamine 1-phosphate + UTP + H(+) = UDP-N-acetyl-alpha-D-glucosamine + diphosphate. Its pathway is nucleotide-sugar biosynthesis; UDP-N-acetyl-alpha-D-glucosamine biosynthesis; N-acetyl-alpha-D-glucosamine 1-phosphate from alpha-D-glucosamine 6-phosphate (route II): step 2/2. It participates in nucleotide-sugar biosynthesis; UDP-N-acetyl-alpha-D-glucosamine biosynthesis; UDP-N-acetyl-alpha-D-glucosamine from N-acetyl-alpha-D-glucosamine 1-phosphate: step 1/1. It functions in the pathway bacterial outer membrane biogenesis; LPS lipid A biosynthesis. Catalyzes the last two sequential reactions in the de novo biosynthetic pathway for UDP-N-acetylglucosamine (UDP-GlcNAc). The C-terminal domain catalyzes the transfer of acetyl group from acetyl coenzyme A to glucosamine-1-phosphate (GlcN-1-P) to produce N-acetylglucosamine-1-phosphate (GlcNAc-1-P), which is converted into UDP-GlcNAc by the transfer of uridine 5-monophosphate (from uridine 5-triphosphate), a reaction catalyzed by the N-terminal domain. The protein is Bifunctional protein GlmU of Histophilus somni (strain 129Pt) (Haemophilus somnus).